Reading from the N-terminus, the 256-residue chain is MVSPDLIRNVVGIVGNAISFGLFLSPVLTFWRIIKEKDMKYFKADPYLATLLNCMLWVFYGLPIVHPNSILVVTINGIGLVIEAVYLTIFFLFSNKKNKKMGVVLATEALFMAAVALGVLLGAHTHQRRSLIVGILCVIFGTIMYSSPLTIMSQVVKTKSVEYMPLLLSVVSFLNGLCWTSYALIRFDIFITIPNGLGVLFTLMQLILDKNQDKNLELPTVAPVAKETSIVTPVSKDDDINGSTASHVIINITKEP.

Over 1 to 9 (MVSPDLIRN) the chain is Extracellular. The helical transmembrane segment at 10 to 30 (VVGIVGNAISFGLFLSPVLTF) threads the bilayer. The 88-residue stretch at 10–97 (VVGIVGNAIS…TIFFLFSNKK (88 aa)) folds into the MtN3/slv 1 domain. Residues 31–45 (WRIIKEKDMKYFKAD) lie on the Cytoplasmic side of the membrane. The chain crosses the membrane as a helical span at residues 46–66 (PYLATLLNCMLWVFYGLPIVH). At 67–69 (PNS) the chain is on the extracellular side. The chain crosses the membrane as a helical span at residues 70–90 (ILVVTINGIGLVIEAVYLTIF). Residues 91–100 (FLFSNKKNKK) are Cytoplasmic-facing. A helical membrane pass occupies residues 101-121 (MGVVLATEALFMAAVALGVLL). The Extracellular segment spans residues 122–130 (GAHTHQRRS). The helical transmembrane segment at 131–151 (LIVGILCVIFGTIMYSSPLTI) threads the bilayer. Residues 133-212 (VGILCVIFGT…LMQLILDKNQ (80 aa)) enclose the MtN3/slv 2 domain. The Cytoplasmic segment spans residues 152-164 (MSQVVKTKSVEYM). Residues 165–185 (PLLLSVVSFLNGLCWTSYALI) traverse the membrane as a helical segment. A topological domain (extracellular) is located at residue R186. The chain crosses the membrane as a helical span at residues 187-207 (FDIFITIPNGLGVLFTLMQLI). The Cytoplasmic segment spans residues 208–256 (LDKNQDKNLELPTVAPVAKETSIVTPVSKDDDINGSTASHVIINITKEP).

It belongs to the SWEET sugar transporter family. As to quaternary structure, forms homooligomers and/or heterooligomers.

It is found in the cell membrane. In terms of biological role, mediates both low-affinity uptake and efflux of sugar across the plasma membrane. This Oryza sativa subsp. japonica (Rice) protein is Putative bidirectional sugar transporter SWEET7e (SWEET7E).